Consider the following 212-residue polypeptide: Thymidylate kinase (212 aa).

13–20 serves as a coordination point for ATP; that stretch reads GLEGAGKS.

It belongs to the thymidylate kinase family.

It carries out the reaction dTMP + ATP = dTDP + ADP. Functionally, phosphorylation of dTMP to form dTDP in both de novo and salvage pathways of dTTP synthesis. This chain is Thymidylate kinase, found in Legionella pneumophila (strain Corby).